The following is a 124-amino-acid chain: Ribosome-binding factor A (124 aa).

This sequence belongs to the RbfA family. Monomer. Binds 30S ribosomal subunits, but not 50S ribosomal subunits or 70S ribosomes.

The protein resides in the cytoplasm. One of several proteins that assist in the late maturation steps of the functional core of the 30S ribosomal subunit. Associates with free 30S ribosomal subunits (but not with 30S subunits that are part of 70S ribosomes or polysomes). Required for efficient processing of 16S rRNA. May interact with the 5'-terminal helix region of 16S rRNA. This Sorangium cellulosum (strain So ce56) (Polyangium cellulosum (strain So ce56)) protein is Ribosome-binding factor A.